The chain runs to 267 residues: V-type proton ATPase subunit D (267 aa).

This sequence belongs to the V-ATPase D subunit family. As to quaternary structure, V-ATPase is a heteromultimeric enzyme composed of a peripheral catalytic V1 complex (components A to H) attached to an integral membrane V0 proton pore complex (components: a, c, c', c'', d, e, f and VOA1).

Its subcellular location is the vacuole membrane. Functionally, subunit of the V1 complex of vacuolar(H+)-ATPase (V-ATPase), a multisubunit enzyme composed of a peripheral complex (V1) that hydrolyzes ATP and a membrane integral complex (V0) that translocates protons. V-ATPase is responsible for acidifying and maintaining the pH of intracellular compartments. The protein is V-type proton ATPase subunit D (VMA8) of Candida albicans (strain SC5314 / ATCC MYA-2876) (Yeast).